Consider the following 179-residue polypeptide: Protein HoxT (179 aa).

The protein is Protein HoxT (hoxT) of Cupriavidus necator (strain ATCC 17699 / DSM 428 / KCTC 22496 / NCIMB 10442 / H16 / Stanier 337) (Ralstonia eutropha).